Consider the following 166-residue polypeptide: Putative 4-hydroxy-4-methyl-2-oxoglutarate aldolase (166 aa).

Substrate-binding positions include 74–77 (GDQI) and Arg-96. Asp-97 lines the a divalent metal cation pocket.

It belongs to the class II aldolase/RraA-like family. Homotrimer. A divalent metal cation is required as a cofactor.

The catalysed reaction is 4-hydroxy-4-methyl-2-oxoglutarate = 2 pyruvate. The enzyme catalyses oxaloacetate + H(+) = pyruvate + CO2. Catalyzes the aldol cleavage of 4-hydroxy-4-methyl-2-oxoglutarate (HMG) into 2 molecules of pyruvate. Also contains a secondary oxaloacetate (OAA) decarboxylase activity due to the common pyruvate enolate transition state formed following C-C bond cleavage in the retro-aldol and decarboxylation reactions. This chain is Putative 4-hydroxy-4-methyl-2-oxoglutarate aldolase, found in Xanthomonas campestris pv. campestris (strain 8004).